Here is a 97-residue protein sequence, read N- to C-terminus: Large ribosomal subunit protein bL28 (97 aa).

The protein belongs to the bacterial ribosomal protein bL28 family.

The chain is Large ribosomal subunit protein bL28 from Rickettsia bellii (strain OSU 85-389).